The primary structure comprises 184 residues: uncharacterized protein (184 aa).

This is an uncharacterized protein from Dictyostelium discoideum (Social amoeba).